The chain runs to 172 residues: Mesogenin-1 (172 aa).

A disordered region spans residues 1–69; it reads METLHHPLVK…SPYSSSSHTQ (69 aa). Residues 18-29 show a composition bias toward polar residues; that stretch reads SSDSEPNSSCMA. Residues 42-66 show a composition bias toward low complexity; it reads SLSQTPSPQSLSPAVSYESPYSSSS. The 55-residue stretch at 108-162 folds into the bHLH domain; it reads QRRRKASEREKLRMRAIAEALHTLRNNLPPMYSQGRQPLTKIQTLKCTINYISEL.

Its subcellular location is the nucleus. Involved in specifying the paraxial, but not dorsal, mesoderm. May regulate the expression of T-box transcription factors required for mesoderm formation and differentiation, such as brachyury T, wnt8, vegt and eomes. The protein is Mesogenin-1 (msgn1) of Xenopus tropicalis (Western clawed frog).